The primary structure comprises 376 residues: Glutamate 5-kinase (376 aa).

Residue lysine 18 participates in ATP binding. Residues serine 58, aspartate 145, and asparagine 157 each contribute to the substrate site. ATP contacts are provided by residues 177 to 178 (SD) and 218 to 224 (TGGMASK). The PUA domain maps to 280–358 (TGALTLDAGA…SELPGELRRP (79 aa)).

Belongs to the glutamate 5-kinase family.

It localises to the cytoplasm. The catalysed reaction is L-glutamate + ATP = L-glutamyl 5-phosphate + ADP. It functions in the pathway amino-acid biosynthesis; L-proline biosynthesis; L-glutamate 5-semialdehyde from L-glutamate: step 1/2. In terms of biological role, catalyzes the transfer of a phosphate group to glutamate to form L-glutamate 5-phosphate. The sequence is that of Glutamate 5-kinase from Mycobacterium tuberculosis (strain CDC 1551 / Oshkosh).